The following is a 394-amino-acid chain: 8-amino-7-oxononanoate synthase (394 aa).

Substrate is bound at residue Arg-21. Gly-112–Tyr-113 provides a ligand contact to pyridoxal 5'-phosphate. His-137 contributes to the substrate binding site. Residues Ser-183, His-211, and Thr-239 each coordinate pyridoxal 5'-phosphate. Lys-242 carries the post-translational modification N6-(pyridoxal phosphate)lysine. Thr-358 provides a ligand contact to substrate.

This sequence belongs to the class-II pyridoxal-phosphate-dependent aminotransferase family. BioF subfamily. Homodimer. Requires pyridoxal 5'-phosphate as cofactor.

The enzyme catalyses 6-carboxyhexanoyl-[ACP] + L-alanine + H(+) = (8S)-8-amino-7-oxononanoate + holo-[ACP] + CO2. Its pathway is cofactor biosynthesis; biotin biosynthesis. In terms of biological role, catalyzes the decarboxylative condensation of pimeloyl-[acyl-carrier protein] and L-alanine to produce 8-amino-7-oxononanoate (AON), [acyl-carrier protein], and carbon dioxide. This chain is 8-amino-7-oxononanoate synthase, found in Paraburkholderia phymatum (strain DSM 17167 / CIP 108236 / LMG 21445 / STM815) (Burkholderia phymatum).